The following is an 89-amino-acid chain: Small ribosomal subunit protein uS15 (89 aa).

The protein belongs to the universal ribosomal protein uS15 family. In terms of assembly, part of the 30S ribosomal subunit. Forms a bridge to the 50S subunit in the 70S ribosome, contacting the 23S rRNA.

One of the primary rRNA binding proteins, it binds directly to 16S rRNA where it helps nucleate assembly of the platform of the 30S subunit by binding and bridging several RNA helices of the 16S rRNA. Functionally, forms an intersubunit bridge (bridge B4) with the 23S rRNA of the 50S subunit in the ribosome. This is Small ribosomal subunit protein uS15 from Pseudomonas putida (strain ATCC 700007 / DSM 6899 / JCM 31910 / BCRC 17059 / LMG 24140 / F1).